The sequence spans 440 residues: Tol-Pal system protein TolB (440 aa).

An N-terminal signal peptide occupies residues Met1–Ala21.

It belongs to the TolB family. As to quaternary structure, the Tol-Pal system is composed of five core proteins: the inner membrane proteins TolA, TolQ and TolR, the periplasmic protein TolB and the outer membrane protein Pal. They form a network linking the inner and outer membranes and the peptidoglycan layer.

The protein localises to the periplasm. Part of the Tol-Pal system, which plays a role in outer membrane invagination during cell division and is important for maintaining outer membrane integrity. The protein is Tol-Pal system protein TolB of Shewanella halifaxensis (strain HAW-EB4).